A 217-amino-acid polypeptide reads, in one-letter code: Urease accessory protein UreE (217 aa).

A disordered region spans residues 148–217; it reads AYGEAAAHGH…DHDHGSGHHH (70 aa). The segment covering 160 to 171 has biased composition (basic and acidic residues); the sequence is AGHDHAHDHDHG. A compositionally biased stretch (low complexity) spans 193–202; it reads AAAPAPHVHG. Residues 206 to 217 show a composition bias toward basic and acidic residues; that stretch reads GHDHDHGSGHHH.

It belongs to the UreE family.

The protein localises to the cytoplasm. Functionally, involved in urease metallocenter assembly. Binds nickel. Probably functions as a nickel donor during metallocenter assembly. The protein is Urease accessory protein UreE of Methylibium petroleiphilum (strain ATCC BAA-1232 / LMG 22953 / PM1).